The primary structure comprises 278 residues: Translation initiation factor IF-3, mitochondrial (278 aa).

Residues methionine 1–lysine 31 constitute a mitochondrion transit peptide. Positions lysine 249 to glutamine 278 are disordered.

Belongs to the IF-3 family.

It localises to the mitochondrion. Its function is as follows. IF-3 binds to the 28S ribosomal subunit and shifts the equilibrium between 55S ribosomes and their 39S and 28S subunits in favor of the free subunits, thus enhancing the availability of 28S subunits on which protein synthesis initiation begins. This is Translation initiation factor IF-3, mitochondrial (MTIF3) from Homo sapiens (Human).